The chain runs to 571 residues: Proline--tRNA ligase (571 aa).

This sequence belongs to the class-II aminoacyl-tRNA synthetase family. ProS type 1 subfamily. In terms of assembly, homodimer.

The protein localises to the cytoplasm. The catalysed reaction is tRNA(Pro) + L-proline + ATP = L-prolyl-tRNA(Pro) + AMP + diphosphate. Catalyzes the attachment of proline to tRNA(Pro) in a two-step reaction: proline is first activated by ATP to form Pro-AMP and then transferred to the acceptor end of tRNA(Pro). As ProRS can inadvertently accommodate and process non-cognate amino acids such as alanine and cysteine, to avoid such errors it has two additional distinct editing activities against alanine. One activity is designated as 'pretransfer' editing and involves the tRNA(Pro)-independent hydrolysis of activated Ala-AMP. The other activity is designated 'posttransfer' editing and involves deacylation of mischarged Ala-tRNA(Pro). The misacylated Cys-tRNA(Pro) is not edited by ProRS. The protein is Proline--tRNA ligase of Acinetobacter baumannii (strain AB307-0294).